Here is a 265-residue protein sequence, read N- to C-terminus: Pre-protein VI (265 aa).

Positions 1–33 (MEDINFSSLAPRHGTRPYMGTWNEIGTSQLNGG) are excised as a propeptide. An amphipathic alpha-helix essential for membrane lytic activity region spans residues 34–54 (AFNWNSIWSGLKNFGSTIKTY). The segment at 36-53 (NWNSIWSGLKNFGSTIKT) is involved in endosomal membrane lysis. The tract at residues 48-74 (GSTIKTYGTKAWNSQTGQMLRDKLKDQ) is interaction with hexon protein. Residues 67-76 (LRDKLKDQNF) carry the Nuclear export signal motif. The interval 123–155 (LETVPGSVPTKGEKRPRPDAEETLVTHTTEPPS) is disordered. Over residues 133-142 (KGEKRPRPDA) the composition is skewed to basic and acidic residues. Positions 136–140 (KRPRP) match the Nuclear localization signal motif. Phosphothreonine; by host is present on Thr148. A PPXY motif motif is present at residues 153–156 (PPSY). Residues 246–257 (STLNSIVGLGVK) carry the Nuclear export signal motif. An interaction with hexon protein region spans residues 248-254 (LNSIVGL). The segment at 255–265 (GVKSLKRRRCY) is binds to importin alpha/beta, involved in hexon nuclear import. Positions 260–263 (KRRR) match the Nuclear localization signal motif.

It belongs to the adenoviridae protein VI family. As to quaternary structure, interacts with hexon protein; this interaction allows nuclear import of hexon trimers and possibly pre-capsid assembly. Interacts (via C-terminal NLS) with importin alpha/beta. Interacts (via PPxY motif) with host NEDD4 ubiquitine ligase; this interaction might play a role in virus intracellular transport during entry. Part of a complex composed of the core-capsid bridging protein, the endosome lysis protein VI and the hexon-linking protein VIII; these interactions bridge the virus core to the capsid. Interacts with peripentonal hexons; this interaction stabilizes the capsid by gluing two peripentonal hexons together and joining them with an adjacent group-of-nine hexon. In terms of assembly, heterodimer with the viral protease; disulfide-linked. Interacts with the viral protease. Post-translationally, ubiquitinated by Nedd4 following partial capsid disassembly; which might play a role in intracellular virus movement during entry. In terms of processing, contains the major nuclear import and export signals. Proteolytically removed during virion maturation. The processing of the C-terminus turns the precursor into a mature viral structural protein and abrogates its ability to promote hexon import and act as a potential chaperone protein.

Its subcellular location is the host nucleus. The protein resides in the host cytoplasm. It localises to the virion. In terms of biological role, during virus assembly, promotes hexon trimers nuclear import through nuclear pore complexes via an importin alpha/beta-dependent mechanism. By analogy to herpesviruses capsid assembly, might act as a chaperone to promote the formation of the icosahedral capsid. Its function is as follows. Structural component of the virion that provides increased stability to the particle shell through its interaction with the core-capsid bridging protein and the hexon-linking protein VIII. Fibers shedding during virus entry into host cell allows the endosome lysis protein to be exposed as a membrane-lytic peptide. Exhibits pH-independent membrane fragmentation activity and probably mediates viral rapid escape from host endosome via organellar membrane lysis. It is not clear if it then remains partially associated with the capsid and involved in the intracellular microtubule-dependent transport of capsid to the nucleus, or if it is lost during endosomal penetration. Functionally, cofactor that activates the viral protease. Binds to viral protease in a 1:1 ratio. The polypeptide is Pre-protein VI (Human adenovirus A serotype 12 (HAdV-12)).